A 411-amino-acid polypeptide reads, in one-letter code: Kelch domain-containing protein 10 (411 aa).

6 Kelch repeats span residues 72–133, 135–186, 187–239, 240–288, 296–342, and 345–388; these read NLYV…LHGH, LLVF…IIHG, FLYV…HDGQ, RIYV…RRCH, EVFI…AVTP, and CMYI…YFPH.

It belongs to the KLHDC10 family. As to quaternary structure, component of a CRL2 E3 ubiquitin-protein ligase complex, also named ECS (Elongin BC-CUL2/5-SOCS-box protein) complex, composed of CUL2, Elongin BC (ELOB and ELOC), RBX1 and substrate-specific adapter KLHDC10.

The protein operates within protein modification; protein ubiquitination. Functionally, substrate-recognition component of a Cul2-RING (CRL2) E3 ubiquitin-protein ligase complex of the DesCEND (destruction via C-end degrons) pathway, which recognizes a C-degron located at the extreme C terminus of target proteins, leading to their ubiquitination and degradation. The C-degron recognized by the DesCEND pathway is usually a motif of less than ten residues and can be present in full-length proteins, truncated proteins or proteolytically cleaved forms. The CRL2(KLHDC10) complex specifically recognizes proteins with a proline-glycine (Pro-Gly) or an alanine tail (CAT tail) at the C-terminus, leading to their ubiquitination and degradation. The CRL2(KLHDC10) complex is involved in the ribosome-associated quality control (RQC) pathway, which mediates the extraction of incompletely synthesized nascent chains from stalled ribosomes: CRL2(KLHDC10) acts downstream of NEMF and recognizes CAT tails associated with stalled nascent chains, leading to their ubiquitination and degradation. This Xenopus tropicalis (Western clawed frog) protein is Kelch domain-containing protein 10.